The following is a 122-amino-acid chain: MIQTETRLKVADNSGARELLVIRVMGGSKRKTGNIGDIVVAAVKQATPGGVVKKGDVVKAVIVRTKSGARREDGSYIKFDENAAVIINADKSPRGTRIFGPVARELREGDFMKIVSLAHEVL.

Belongs to the universal ribosomal protein uL14 family. As to quaternary structure, part of the 50S ribosomal subunit. Forms a cluster with proteins L3 and L19. In the 70S ribosome, L14 and L19 interact and together make contacts with the 16S rRNA in bridges B5 and B8.

In terms of biological role, binds to 23S rRNA. Forms part of two intersubunit bridges in the 70S ribosome. The polypeptide is Large ribosomal subunit protein uL14 (Lactobacillus delbrueckii subsp. bulgaricus (strain ATCC 11842 / DSM 20081 / BCRC 10696 / JCM 1002 / NBRC 13953 / NCIMB 11778 / NCTC 12712 / WDCM 00102 / Lb 14)).